Consider the following 356-residue polypeptide: 16-methoxy-2,3-dihydro-3-hydroxytabersonine synthase (356 aa).

Zn(2+) contacts are provided by C49, H71, C102, C105, C108, C116, and C162. 187–192 (GLGAVG) contributes to the NAD(+) binding site.

Belongs to the zinc-containing alcohol dehydrogenase family. It depends on Zn(2+) as a cofactor. As to expression, expressed in leaf epidermis.

The catalysed reaction is (3R)-3-hydroxy-16-methoxy-2,3-dihydrotabersonine + A = (3R)-1,2-didehydro-3-hydroxy-16-methoxy-2,3-dihydrotabersonine + AH2. It catalyses the reaction (3R)-3-hydroxy-2,3-dihydrotabersonine + A = (3R)-1,2-didehydro-3-hydroxy-2,3-dihydrotabersonine + AH2. It functions in the pathway alkaloid biosynthesis; vindoline biosynthesis. Functionally, converts the unstable imine alcohols produced by CYP71D1V2/T3O into 3-hydroxy-16-methoxy-2,3-dihydrotabersonine or 3-hydroxy-2,3-dihydrotabersonine. The protein is 16-methoxy-2,3-dihydro-3-hydroxytabersonine synthase of Catharanthus roseus (Madagascar periwinkle).